A 151-amino-acid polypeptide reads, in one-letter code: Regulatory protein RecX (151 aa).

It belongs to the RecX family.

Its subcellular location is the cytoplasm. Functionally, modulates RecA activity. The chain is Regulatory protein RecX from Chlorobium phaeobacteroides (strain BS1).